Consider the following 430-residue polypeptide: Enolase (430 aa).

(2R)-2-phosphoglycerate is bound at residue glutamine 167. The active-site Proton donor is glutamate 209. Positions 246, 287, and 314 each coordinate Mg(2+). (2R)-2-phosphoglycerate is bound by residues lysine 339, arginine 368, serine 369, and lysine 390. Residue lysine 339 is the Proton acceptor of the active site.

It belongs to the enolase family. It depends on Mg(2+) as a cofactor.

The protein localises to the cytoplasm. It localises to the secreted. It is found in the cell surface. It carries out the reaction (2R)-2-phosphoglycerate = phosphoenolpyruvate + H2O. It participates in carbohydrate degradation; glycolysis; pyruvate from D-glyceraldehyde 3-phosphate: step 4/5. Functionally, catalyzes the reversible conversion of 2-phosphoglycerate (2-PG) into phosphoenolpyruvate (PEP). It is essential for the degradation of carbohydrates via glycolysis. This Prochlorococcus marinus (strain MIT 9515) protein is Enolase.